The sequence spans 757 residues: NAD(P)H-quinone oxidoreductase subunit 5, chloroplastic (757 aa).

The next 17 membrane-spanning stretches (helical) occupy residues 9–29 (WIIP…LLLV), 40–60 (WAFP…DLSV), 89–109 (IDPL…MVLI), 122–139 (LRFF…LGLV), 147–167 (IYIF…FWFT), 185–205 (GDFG…SFEF), 219–239 (NGVN…GAVA), 258–278 (TPIS…FLVA), 280–300 (LLPL…IGVI), 327–347 (LGYI…FHLI), 354–374 (ALLF…VGYS), 396–416 (MTFL…CFWS), 425–445 (WLYS…TAFY), 544–564 (LLPL…GIPF), 607–627 (SIAY…YLFF), 692–712 (GIMN…KYLG), and 718–738 (SYLF…IFFF).

The protein belongs to the complex I subunit 5 family. As to quaternary structure, NDH is composed of at least 16 different subunits, 5 of which are encoded in the nucleus.

Its subcellular location is the plastid. The protein resides in the chloroplast thylakoid membrane. It carries out the reaction a plastoquinone + NADH + (n+1) H(+)(in) = a plastoquinol + NAD(+) + n H(+)(out). The catalysed reaction is a plastoquinone + NADPH + (n+1) H(+)(in) = a plastoquinol + NADP(+) + n H(+)(out). Its function is as follows. NDH shuttles electrons from NAD(P)H:plastoquinone, via FMN and iron-sulfur (Fe-S) centers, to quinones in the photosynthetic chain and possibly in a chloroplast respiratory chain. The immediate electron acceptor for the enzyme in this species is believed to be plastoquinone. Couples the redox reaction to proton translocation, and thus conserves the redox energy in a proton gradient. The protein is NAD(P)H-quinone oxidoreductase subunit 5, chloroplastic (ndhF) of Drimys granadensis.